A 758-amino-acid chain; its full sequence is Matrix metalloproteinase-2 (758 aa).

Positions 1 to 17 are cleaved as a signal peptide; sequence MFSKYVLATLLALFAQS. Histidine 257 contacts Zn(2+). Residue glutamate 258 is part of the active site. Zn(2+) contacts are provided by histidine 261 and histidine 267. The interval 335-514 is disordered; sequence AYWPWNNPSN…HNKPRKPKPD (180 aa). Low complexity predominate over residues 338-348; it reads PWNNPSNNPNN. Basic and acidic residues predominate over residues 349–476; the sequence is DRNRARERQE…EWERRNRNGA (128 aa). Residues 479–494 are compositionally biased toward low complexity; sequence PVTPTANTTPRPTNKP. Positions 499 to 510 are enriched in basic residues; that stretch reads HRQHHHHNKPRK. 4 Hemopexin repeats span residues 513-561, 565-610, 612-659, and 660-707; these read PDSC…WSAL, LTKV…GLPP, LTHI…WSGV, and GYNI…WMQC. The cysteines at positions 516 and 707 are disulfide-linked. The helical transmembrane segment at 739–756 threads the bilayer; it reads LRINHFILSILLLAIANW. Topologically, residues 757-758 are cytoplasmic; the sequence is RS.

It belongs to the peptidase M10A family. Ca(2+) serves as cofactor. The cofactor is Zn(2+). Widely expressed during embryogenesis including in the mesoderm, developing gut, central and peripheral nervous systems and imaginal disks. In the embryonic nervous system, expressed in neurons and glia. In third instar larvae, strongly expressed in the morphogenetic furrow of eye imaginal disks and in the optic lobe region of the brain. Expressed in posterior follicle cells in all mature stage 14 follicles but not in earlier follicles and is also expressed in some anterior follicle cells that help form dorsal eggshell structures.

The protein localises to the cell membrane. In terms of biological role, has metalloproteinase activity. Proteolytically cleaves the PGRP-LC receptor; involved in gut-fat body innate immunological communication (GFIC)-mediated activation of the imd/Relish signal transduction pathway. Required for larval tissue histolysis during metamorphosis and is involved in pupal head eversion and fusion of the wing imaginal tissue. Required for growth of the dorsal air sac primordium and development of the dorsal air sacs. Promotes embryonic motor axon fasciculation. Cleaves and activates frac to promote motor axon bundling during outgrowth. Promotes the reshaping of adult sensory neuron dendrites from a radial to lattice-like shape which occurs after eclosion by degrading the basement membrane on which the dendrites grow. Involved in inhibition of follicle stem cell proliferation by cleaving Dlp, inhibiting its interaction with wg and preventing Dlp-mediated spreading of wg to follicle stem cells to enhance their proliferation. Plays a role in wound healing. Involved in fat body dissociation which occurs during metamorphosis by degrading basement membrane components, leading to destruction of cell-basement membrane junctions. Required for posterior follicle cell degradation and ovulation. This Drosophila melanogaster (Fruit fly) protein is Matrix metalloproteinase-2.